We begin with the raw amino-acid sequence, 344 residues long: Dihydroorotate dehydrogenase (quinone) (344 aa).

FMN is bound by residues 65 to 69 (AGFDK) and Thr89. Lys69 provides a ligand contact to substrate. Substrate is bound at residue 114-118 (NRMGF). Residues Asn145 and Asn178 each coordinate FMN. Asn178 lines the substrate pocket. The Nucleophile role is filled by Ser181. Asn183 contacts substrate. FMN-binding residues include Lys215 and Thr243. Residue 244-245 (NT) participates in substrate binding. FMN contacts are provided by residues Gly269, Gly298, and 319-320 (YT).

It belongs to the dihydroorotate dehydrogenase family. Type 2 subfamily. As to quaternary structure, monomer. FMN serves as cofactor.

It localises to the cell membrane. It catalyses the reaction (S)-dihydroorotate + a quinone = orotate + a quinol. It participates in pyrimidine metabolism; UMP biosynthesis via de novo pathway; orotate from (S)-dihydroorotate (quinone route): step 1/1. Functionally, catalyzes the conversion of dihydroorotate to orotate with quinone as electron acceptor. The polypeptide is Dihydroorotate dehydrogenase (quinone) (Clavibacter michiganensis subsp. michiganensis (strain NCPPB 382)).